A 185-amino-acid polypeptide reads, in one-letter code: Adenine phosphoribosyltransferase (185 aa).

Belongs to the purine/pyrimidine phosphoribosyltransferase family. Homodimer.

Its subcellular location is the cytoplasm. It carries out the reaction AMP + diphosphate = 5-phospho-alpha-D-ribose 1-diphosphate + adenine. It functions in the pathway purine metabolism; AMP biosynthesis via salvage pathway; AMP from adenine: step 1/1. Catalyzes a salvage reaction resulting in the formation of AMP, that is energically less costly than de novo synthesis. This is Adenine phosphoribosyltransferase from Pectobacterium atrosepticum (strain SCRI 1043 / ATCC BAA-672) (Erwinia carotovora subsp. atroseptica).